We begin with the raw amino-acid sequence, 490 residues long: tRNA-guanine(15) transglycosylase (490 aa).

The active-site Nucleophile is D90. Residues D125 and A193 each contribute to the substrate site. Residues C276, C278, and C281 each coordinate Zn(2+).

This sequence belongs to the archaeosine tRNA-ribosyltransferase family. Zn(2+) is required as a cofactor.

It carries out the reaction guanosine(15) in tRNA + 7-cyano-7-deazaguanine = 7-cyano-7-carbaguanosine(15) in tRNA + guanine. Its pathway is tRNA modification; archaeosine-tRNA biosynthesis. Functionally, exchanges the guanine residue with 7-cyano-7-deazaguanine (preQ0) at position 15 in the dihydrouridine loop (D-loop) of archaeal tRNAs. The protein is tRNA-guanine(15) transglycosylase of Methanosarcina acetivorans (strain ATCC 35395 / DSM 2834 / JCM 12185 / C2A).